We begin with the raw amino-acid sequence, 151 residues long: Large ribosomal subunit protein uL13 (151 aa).

This sequence belongs to the universal ribosomal protein uL13 family. In terms of assembly, part of the 50S ribosomal subunit.

Its function is as follows. This protein is one of the early assembly proteins of the 50S ribosomal subunit, although it is not seen to bind rRNA by itself. It is important during the early stages of 50S assembly. The sequence is that of Large ribosomal subunit protein uL13 from Synechococcus sp. (strain JA-3-3Ab) (Cyanobacteria bacterium Yellowstone A-Prime).